Reading from the N-terminus, the 382-residue chain is Cytoplasmic tRNA 2-thiolation protein 2 (382 aa).

Belongs to the CTU2/NCS2 family.

It localises to the cytoplasm. It participates in tRNA modification; 5-methoxycarbonylmethyl-2-thiouridine-tRNA biosynthesis. Its function is as follows. Plays a central role in 2-thiolation of mcm(5)S(2)U at tRNA wobble positions of tRNA(Lys), tRNA(Glu) and tRNA(Gln). May act by forming a heterodimer with NCS6 that ligates sulfur from thiocarboxylated URM1 onto the uridine of tRNAs at wobble position. Prior mcm(5) tRNA modification by the elongator complex is required for 2-thiolation. May also be involved in protein urmylation. The chain is Cytoplasmic tRNA 2-thiolation protein 2 from Phaeosphaeria nodorum (strain SN15 / ATCC MYA-4574 / FGSC 10173) (Glume blotch fungus).